The sequence spans 464 residues: MEKRNERQVILFPLPLQGCINPMLQLAKILYSRGFSITIIHTRFNAPKSSDHPLFTFLQIRDGLSESQTQSRDLLLQLTLLNNNCQIPFRECLAKLIKPSSDSGTEDRKISCVIDDSGWVFTQSVAESFNLPRFVLCAYKFSFFLGHFLVPQIRREGFLPVPDSEADDLVPEFPPLRKKDLSRIMGTSAQSKPLDAYLLKILDATKPASGIIVMSCKELDHDSLAESNKVFSIPIFPIGPFHIHDVPASSSSLLEPDQSCIPWLDMRETRSVVYVSLGSIASLNESDFLEIACGLRNTNQSFLWVVRPGSVHGRDWIESLPSGFMESLDGKGKIVRWAPQLDVLAHRATGGFLTHNGWNSTLESICEGVPMICLPCKWDQFVNARFISEVWRVGIHLEGRIERREIERAVIRLMVESKGEEIRGRIKVLRDEVRRSVKQGGSSYRSLDELVDRISIIIEPLVPT.

UDP-alpha-D-glucose is bound by residues Ser279, 338–340 (APQ), 355–363 (HNGWNSTLE), and 377–380 (KWDQ).

Belongs to the UDP-glycosyltransferase family.

With respect to regulation, inhibited by olomoucine and 3-isobutyl-1-methylxanthine. Its function is as follows. Involved in the N-glucosylation of cytokinins. Catalyzes the formation of both the 7-N and the 9-N-glucosides. The chain is UDP-glycosyltransferase 76C1 (UGT76C1) from Arabidopsis thaliana (Mouse-ear cress).